Here is a 370-residue protein sequence, read N- to C-terminus: Aminomethyltransferase (370 aa).

This sequence belongs to the GcvT family. As to quaternary structure, the glycine cleavage system is composed of four proteins: P, T, L and H.

It catalyses the reaction N(6)-[(R)-S(8)-aminomethyldihydrolipoyl]-L-lysyl-[protein] + (6S)-5,6,7,8-tetrahydrofolate = N(6)-[(R)-dihydrolipoyl]-L-lysyl-[protein] + (6R)-5,10-methylene-5,6,7,8-tetrahydrofolate + NH4(+). In terms of biological role, the glycine cleavage system catalyzes the degradation of glycine. This is Aminomethyltransferase from Stenotrophomonas maltophilia (strain R551-3).